Here is a 719-residue protein sequence, read N- to C-terminus: Polyphosphate kinase (719 aa).

An ATP-binding site is contributed by N47. Positions 377 and 407 each coordinate Mg(2+). H437 (phosphohistidine intermediate) is an active-site residue. Residues Y470, R566, and H594 each contribute to the ATP site.

The protein belongs to the polyphosphate kinase 1 (PPK1) family. Requires Mg(2+) as cofactor. In terms of processing, an intermediate of this reaction is the autophosphorylated ppk in which a phosphate is covalently linked to a histidine residue through a N-P bond.

It carries out the reaction [phosphate](n) + ATP = [phosphate](n+1) + ADP. Its function is as follows. Catalyzes the reversible transfer of the terminal phosphate of ATP to form a long-chain polyphosphate (polyP). The protein is Polyphosphate kinase of Exiguobacterium sibiricum (strain DSM 17290 / CCUG 55495 / CIP 109462 / JCM 13490 / 255-15).